The sequence spans 341 residues: Ribosomal RNA small subunit methyltransferase C (341 aa).

Belongs to the methyltransferase superfamily. RsmC family. As to quaternary structure, monomer.

Its subcellular location is the cytoplasm. It carries out the reaction guanosine(1207) in 16S rRNA + S-adenosyl-L-methionine = N(2)-methylguanosine(1207) in 16S rRNA + S-adenosyl-L-homocysteine + H(+). Its function is as follows. Specifically methylates the guanine in position 1207 of 16S rRNA in the 30S particle. The sequence is that of Ribosomal RNA small subunit methyltransferase C from Pseudoalteromonas translucida (strain TAC 125).